A 151-amino-acid chain; its full sequence is Macrodomain Ter protein (151 aa).

This sequence belongs to the MatP family. As to quaternary structure, homodimer.

The protein localises to the cytoplasm. Required for spatial organization of the terminus region of the chromosome (Ter macrodomain) during the cell cycle. Prevents early segregation of duplicated Ter macrodomains during cell division. Binds specifically to matS, which is a 13 bp signature motif repeated within the Ter macrodomain. The sequence is that of Macrodomain Ter protein from Enterobacter sp. (strain 638).